We begin with the raw amino-acid sequence, 962 residues long: Synphilin-1 (962 aa).

3 disordered regions span residues 80–99, 104–137, and 222–249; these read SPLKHQPETLENNENEDQKN, YQKGGETDQGPQPEELSPEDGVGGLPGKGSEPSQ, and TALRDQHKLSTEDSESSPALGKCGPAYE. 4 ANK repeats span residues 348–379, 383–412, 418–447, and 455–484; these read NGNNLLHIAASKGHAECLQHLTSLMGEDCLNE, EQLTPAGLAIKNGQLECVRWMVSETEAIAE, DFPSLIHYAGCYGQEKILLWLLQFMQEQGI, and EGNSAVHVASQHGYLGCIQTLVEYGANVTM. Positions 522–548 form a coiled coil; it reads VKLTKQLKEQTVERVTLQSQLQQLLEA. Residues 548 to 590 form a disordered region; it reads AQKSEGKSLPSSPSSPSSPASTKSQWKALDTDEESTGKSKVGA. The segment covering 554-571 has biased composition (low complexity); that stretch reads KSLPSSPSSPSSPASTKS. The ANK 5 repeat unit spans residues 602–631; it reads VSSRARTKGKDEDSDKILRQLLGKEISENV. A compositionally biased stretch (low complexity) spans 667–684; sequence RQLMQRSLSESDTDSNNS. The interval 667 to 852 is disordered; the sequence is RQLMQRSLSE…QRTSESGEQM (186 aa). The segment covering 685–699 has biased composition (basic and acidic residues); sequence EDPKNTPVKRADRPR. The ANK 6 repeat unit spans residues 698-728; that stretch reads PRPQPIVESVENVDSAESLHLMIKKHSLASG. Residues 772–790 are compositionally biased toward polar residues; that stretch reads PSTEATQSSPDSTAAQKVA. Residues 831 to 840 show a composition bias toward basic and acidic residues; the sequence is NGEKDKDKGR.

In terms of assembly, associates with SNCA, RNF19A and PRKN. Post-translationally, ubiquitinated; mediated by SIAH1 or RNF19A and leading to its subsequent proteasomal degradation.

The protein is Synphilin-1 (Sncaip) of Mus musculus (Mouse).